The primary structure comprises 1412 residues: MPN domain-containing protein CG4751 (1412 aa).

Over residues 1–10 the composition is skewed to basic and acidic residues; sequence MENGVEHGVD. The segment at 1 to 123 is disordered; sequence MENGVEHGVD…TKENYEGFNG (123 aa). Composition is skewed to acidic residues over residues 23–35 and 103–114; these read GEGD…EVEG and SDAGDEDNDDET. The region spanning 113-219 is the RAMA domain; the sequence is ETKENYEGFN…AYKNTYLRKC (107 aa). The 137-residue stretch at 284–420 folds into the MPN domain; it reads ITVNSSALLL…LESVVKCIWI (137 aa). The Zn(2+) site is built by His361, His363, and Asp374. 7 disordered regions span residues 554–589, 669–734, 853–891, 1027–1066, 1271–1318, 1330–1376, and 1389–1412; these read INPP…QKAS, SALN…DIAR, GGSG…NSYK, SIPP…QQQQ, MKPP…NSGG, SSVP…SGGV, and LAAP…LSHD. The stretch at 572-600 forms a coiled coil; sequence SGRKAEEESNAQAEQKASELKVMSLQEQL. Ser699, Ser701, Ser705, Ser719, Ser723, and Ser728 each carry phosphoserine. Over residues 702 to 720 the composition is skewed to polar residues; it reads PAKSDTSSHASTSRTRNSP. Low complexity-rich tracts occupy residues 873-891 and 1036-1066; these read KSSS…NSYK and SSGS…QQQQ. A compositionally biased stretch (polar residues) spans 1275–1290; that stretch reads KSTTPSSARTRESSAS. A phosphoserine mark is found at Ser1288 and Ser1290. The residue at position 1297 (Thr1297) is a Phosphothreonine. Positions 1360-1370 are enriched in low complexity; that stretch reads LYGELAPPGAL.

Belongs to the peptidase M67 family.

Probable protease. The protein is MPN domain-containing protein CG4751 of Drosophila melanogaster (Fruit fly).